The chain runs to 558 residues: Dihydroxy-acid dehydratase (558 aa).

Position 78 (aspartate 78) interacts with Mg(2+). Cysteine 119 contributes to the [2Fe-2S] cluster binding site. The Mg(2+) site is built by aspartate 120 and lysine 121. At lysine 121 the chain carries N6-carboxylysine. Position 192 (cysteine 192) interacts with [2Fe-2S] cluster. Glutamate 446 serves as a coordination point for Mg(2+). Residue serine 472 is the Proton acceptor of the active site.

It belongs to the IlvD/Edd family. Homodimer. The cofactor is [2Fe-2S] cluster. Mg(2+) is required as a cofactor.

It carries out the reaction (2R)-2,3-dihydroxy-3-methylbutanoate = 3-methyl-2-oxobutanoate + H2O. It catalyses the reaction (2R,3R)-2,3-dihydroxy-3-methylpentanoate = (S)-3-methyl-2-oxopentanoate + H2O. It participates in amino-acid biosynthesis; L-isoleucine biosynthesis; L-isoleucine from 2-oxobutanoate: step 3/4. Its pathway is amino-acid biosynthesis; L-valine biosynthesis; L-valine from pyruvate: step 3/4. In terms of biological role, functions in the biosynthesis of branched-chain amino acids. Catalyzes the dehydration of (2R,3R)-2,3-dihydroxy-3-methylpentanoate (2,3-dihydroxy-3-methylvalerate) into 2-oxo-3-methylpentanoate (2-oxo-3-methylvalerate) and of (2R)-2,3-dihydroxy-3-methylbutanoate (2,3-dihydroxyisovalerate) into 2-oxo-3-methylbutanoate (2-oxoisovalerate), the penultimate precursor to L-isoleucine and L-valine, respectively. This is Dihydroxy-acid dehydratase from Campylobacter jejuni subsp. jejuni serotype O:2 (strain ATCC 700819 / NCTC 11168).